The chain runs to 316 residues: MPMQGAQRKLLGSLNSTPTATSNLGLAANHTGAPCLEVSIPDGLFLSLGLVSLVENMLVVAAIAKNRNLHSPMYCFICCLALSDLLVSGSNMLETAVVVLLEAGALATRASVVQQLHNTIDVLTYSSMLCSLCFVGAIAVDRYISIFYALRYHSIMTLPRVQRVIAAIWVASVTSSTLFITYYEHVVALLCLVVFLTMLVLMAVLYVHMLARACQHAQGITRLHKRQPPAHQGFGLRGAATLTILLGIFFLCWGPFFLHLTLVVFCPQHLTCSCIFKNFKVFLTLIICNTIIDPLIYAFRSQELCRTLKEVLLCSW.

Topologically, residues 1–37 are extracellular; the sequence is MPMQGAQRKLLGSLNSTPTATSNLGLAANHTGAPCLE. The N-linked (GlcNAc...) asparagine glycan is linked to Asn-29. A helical membrane pass occupies residues 38–63; it reads VSIPDGLFLSLGLVSLVENMLVVAAI. The Cytoplasmic segment spans residues 64–72; that stretch reads AKNRNLHSP. Residues 73–93 traverse the membrane as a helical segment; sequence MYCFICCLALSDLLVSGSNML. Topologically, residues 94 to 118 are extracellular; it reads ETAVVVLLEAGALATRASVVQQLHN. A helical transmembrane segment spans residues 119–140; the sequence is TIDVLTYSSMLCSLCFVGAIAV. Over 141–163 the chain is Cytoplasmic; sequence DRYISIFYALRYHSIMTLPRVQR. The chain crosses the membrane as a helical span at residues 164–183; the sequence is VIAAIWVASVTSSTLFITYY. The Extracellular segment spans residues 184–191; the sequence is EHVVALLC. The helical transmembrane segment at 192–210 threads the bilayer; it reads LVVFLTMLVLMAVLYVHML. Topologically, residues 211–239 are cytoplasmic; it reads ARACQHAQGITRLHKRQPPAHQGFGLRGA. Residues 240 to 265 form a helical membrane-spanning segment; sequence ATLTILLGIFFLCWGPFFLHLTLVVF. Over 266–278 the chain is Extracellular; it reads CPQHLTCSCIFKN. Residues 279–299 form a helical membrane-spanning segment; it reads FKVFLTLIICNTIIDPLIYAF. Over 300–316 the chain is Cytoplasmic; sequence RSQELCRTLKEVLLCSW. The S-palmitoyl cysteine moiety is linked to residue Cys-314.

It belongs to the G-protein coupled receptor 1 family. In terms of assembly, interacts with MGRN1, but does not undergo MGRN1-mediated ubiquitination; this interaction competes with GNAS-binding and thus inhibits agonist-induced cAMP production. Interacts with OPN3; the interaction results in a decrease in MC1R-mediated cAMP signaling and ultimately a decrease in melanin production in melanocytes.

It is found in the cell membrane. Functionally, receptor for MSH (alpha, beta and gamma) and ACTH. The activity of this receptor is mediated by G proteins which activate adenylate cyclase. Mediates melanogenesis, the production of eumelanin (black/brown) and phaeomelanin (red/yellow), via regulation of cAMP signaling in melanocytes. The sequence is that of Melanocyte-stimulating hormone receptor (MC1R) from Cebus albifrons (White-fronted capuchin).